The following is a 729-amino-acid chain: Fibroblast growth factor receptor homolog 1 (729 aa).

A signal peptide spans 1–36; sequence MAAAWSWRASHSTITMTSGSLVVLFLLLSIWQPAVQ. Topologically, residues 37 to 309 are extracellular; that stretch reads VEGRRQMANS…VASGSLHSTS (273 aa). Residues 56 to 101 are disordered; the sequence is ARSQNKTPAITNNANQSSTSSADLDDGAADDDDNKADLPVNVSSKP. A compositionally biased stretch (low complexity) spans 66–77; sequence TNNANQSSTSSA. The N-linked (GlcNAc...) asparagine glycan is linked to N70. Acidic residues predominate over residues 78–89; sequence DLDDGAADDDDN. N-linked (GlcNAc...) asparagine glycans are attached at residues N96, N134, N140, N171, N207, N213, N242, N246, and N282. Ig-like C2-type domains lie at 106–192 and 203–279; these read PKKM…VIVS and TGPL…NSLG. The cysteines at positions 125 and 174 are disulfide-linked. Cysteines 220 and 272 form a disulfide. A helical transmembrane segment spans residues 310 to 330; that stretch reads FVYIFVFGGLIFIFMTTLFVF. Residues 331–729 lie on the Cytoplasmic side of the membrane; it reads YAIRKMKHEK…TDNLQKWCNY (399 aa). The Protein kinase domain occupies 416–692; it reads LVLGATLGEG…EIVEYMDKLL (277 aa). Residues 422–430 and K443 contribute to the ATP site; that span reads LGEGAFGRV. D556 acts as the Proton acceptor in catalysis. Y587 bears the Phosphotyrosine; by autocatalysis mark.

It belongs to the protein kinase superfamily. Tyr protein kinase family. Fibroblast growth factor receptor subfamily. As to expression, in early embryos, expression is specific to mesodermal primordium and invaginated mesodermal cells. At later stages, expression is seen in putative muscle precursor cells and in the CNS.

It localises to the membrane. The catalysed reaction is L-tyrosyl-[protein] + ATP = O-phospho-L-tyrosyl-[protein] + ADP + H(+). Functionally, may be required for patterning of muscle precursor cells. May be essential for generation of mesodermal and endodermal layers, invaginations of various types of cells and CNS formation. The chain is Fibroblast growth factor receptor homolog 1 (htl) from Drosophila melanogaster (Fruit fly).